The following is a 156-amino-acid chain: Cytochrome c-type biogenesis protein CcmE 1 (156 aa).

Residues 1–8 are Cytoplasmic-facing; it reads MNATRKQR. The chain crosses the membrane as a helical; Signal-anchor for type II membrane protein span at residues 9–29; that stretch reads LWLVIGVLAAAALAVTLIVFA. The Periplasmic segment spans residues 30–156; the sequence is LQRNMSYLFT…ATVAPLTAPR (127 aa). Heme is bound by residues histidine 123 and tyrosine 127.

Belongs to the CcmE/CycJ family.

It is found in the cell inner membrane. Heme chaperone required for the biogenesis of c-type cytochromes. Transiently binds heme delivered by CcmC and transfers the heme to apo-cytochromes in a process facilitated by CcmF and CcmH. The chain is Cytochrome c-type biogenesis protein CcmE 1 from Xanthomonas axonopodis pv. citri (strain 306).